We begin with the raw amino-acid sequence, 1050 residues long: FHIP family protein GE18198 (1050 aa).

Phosphoserine is present on residues serine 498 and serine 805. Disordered stretches follow at residues 800–827 (KGNE…GQLR), 865–888 (TSMF…SASS), 911–954 (TDGR…SGSN), and 968–995 (SNTT…SEPA). The span at 808–826 (HHSQQQQMATNSGQQQGQL) shows a compositional bias: polar residues. The span at 872-888 (SASNTSTTPPNGSSASS) shows a compositional bias: low complexity. Positions 918-935 (HAQTSAGTCETSLSTQPQ) are enriched in polar residues. Over residues 941 to 954 (TGAIATSATASGSN) the composition is skewed to low complexity. The span at 968 to 977 (SNTTTHSAST) shows a compositional bias: polar residues.

The protein belongs to the FHIP family.

This is FHIP family protein GE18198 from Drosophila yakuba (Fruit fly).